Consider the following 842-residue polypeptide: Homeobox-leucine zipper protein REVOLUTA (842 aa).

The tract at residues 1–20 (MEMAVANHRERSSDSMNRHL) is disordered. Basic and acidic residues predominate over residues 7–20 (NHRERSSDSMNRHL). A DNA-binding region (homeobox) is located at residues 22–85 (SSGKYVRYTA…NRRCRDKQRK (64 aa)). Residues 90–121 (LQSVNRKLSAMNKLLMEENDRLQKQVSQLVCE) are a coiled coil. The region spanning 151–379 (DANSPAGLLS…LAQESNGEVV (229 aa)) is the START domain.

It belongs to the HD-ZIP homeobox family. Class III subfamily. In terms of assembly, homodimer. Heterodimer with ZPR1, ZPR2, ZPR3 or ZPR4. Interacts with ESR1 and ESR2. Interacts with ZPR1, ZPR2, ZPR3 and ZPR4. Heterodimerization with ZPR3 prevents DNA binding by REV. Expressed in the interfascicular regions of stem and vascular bundles of young roots and leaves.

Its subcellular location is the nucleus. Probable transcription factor involved in the regulation of interfascicular fiber (cortical cells) and secondary xylem differentiation in the inflorescence stems. Required for lateral shoot meristems (LSMs) and flower meristems (FMs) initiation. May be involved in the determination of vascular patterning and organ polarity. Directly regulates the expression of AGO10, ZPR1, ZPR2, ZPR3 and ZPR4. Required to regulate adaxial-abaxial polarity and leaf axial patterning. In Arabidopsis thaliana (Mouse-ear cress), this protein is Homeobox-leucine zipper protein REVOLUTA.